The primary structure comprises 175 residues: MKTMFLLALLAFTATSAVAQLYTTCSQGYGQCQQQPQPQPQMNTCAAFLQQCIQTPYVQSQMWQASGCQLMRQQCCQPLAQISEQARCQAVCSVSQIIMRQQQGQRFGQPQQQQGQSFGQPQQQVPVEIMRMVLQTLPSMCSVNIPQYCTTTPCSTITPAIYSIPMTATCAGGAC.

A signal peptide spans 1 to 19 (MKTMFLLALLAFTATSAVA).

It belongs to the prolamin family. Post-translationally, contains 7 disulfide bonds.

Its function is as follows. Seed storage protein. Not integrated in the gluten polymer through disulfide bonds, unless incorporated by reduction and reoxidation during dough making. Increases dough strength and bread volume, but decreases dough stability when added into a base wheat flour. The sequence is that of Avenin-like a3 from Triticum aestivum (Wheat).